The primary structure comprises 406 residues: MIQVSQDSIKKTDGSVASPKGYLAKGVHCGLRYSKKDLGIIISSRPAVSAAVYTQSHFQAAPIKVTQESLKKSAHLQAVIVNSANANACTGEQGLKDAYEMRRQSADMLGIEPDLVAVSSTGVIGEYLNMENITKGISLLAETEPAEGDFEEAILTTDTVIKQTCYELMIGGQKVTIGGAAKGSGMIHPNMATMLGFVTTDACIEESALQRALREITDVSFNQITVDGDTSTNDMVLVMANGCAGNERLHEEHEDWPVFKKGLQLVCTDLAKQIARDGEGATKLIEVEVNGAKSNLEAQIIAKKIVGSNLVKTAVYGTDANWGRIVVAIGDSMAAVTPEKVEIRLGGQCLFKNNEPQPFSEELAKTYLENSEVKIEVFMQEGEGKGTAWGCDLTYEYVKINASYRT.

Residues threonine 156, lysine 182, threonine 193, glutamate 279, asparagine 401, and threonine 406 each coordinate substrate. Threonine 193 functions as the Nucleophile in the catalytic mechanism.

The protein belongs to the ArgJ family. As to quaternary structure, heterotetramer of two alpha and two beta chains.

It localises to the cytoplasm. It carries out the reaction N(2)-acetyl-L-ornithine + L-glutamate = N-acetyl-L-glutamate + L-ornithine. The catalysed reaction is L-glutamate + acetyl-CoA = N-acetyl-L-glutamate + CoA + H(+). Its pathway is amino-acid biosynthesis; L-arginine biosynthesis; L-ornithine and N-acetyl-L-glutamate from L-glutamate and N(2)-acetyl-L-ornithine (cyclic): step 1/1. The protein operates within amino-acid biosynthesis; L-arginine biosynthesis; N(2)-acetyl-L-ornithine from L-glutamate: step 1/4. Catalyzes two activities which are involved in the cyclic version of arginine biosynthesis: the synthesis of N-acetylglutamate from glutamate and acetyl-CoA as the acetyl donor, and of ornithine by transacetylation between N(2)-acetylornithine and glutamate. This is Arginine biosynthesis bifunctional protein ArgJ from Bacillus licheniformis (strain ATCC 14580 / DSM 13 / JCM 2505 / CCUG 7422 / NBRC 12200 / NCIMB 9375 / NCTC 10341 / NRRL NRS-1264 / Gibson 46).